The primary structure comprises 310 residues: D-alanine--D-alanine ligase (310 aa).

Residues 107-305 enclose the ATP-grasp domain; that stretch reads KKVWQSAGLP…FSALVQSILA (199 aa). Position 134–189 (134–189) interacts with ATP; it reads EQLHCQDFVIKPALEGSSVGVSRVKNQEQLAAAIPFAGGARAKIMAEPWIVGRELT. 3 residues coordinate Mg(2+): Asp259, Glu272, and Asn274.

It belongs to the D-alanine--D-alanine ligase family. The cofactor is Mg(2+). It depends on Mn(2+) as a cofactor.

It localises to the cytoplasm. It catalyses the reaction 2 D-alanine + ATP = D-alanyl-D-alanine + ADP + phosphate + H(+). It participates in cell wall biogenesis; peptidoglycan biosynthesis. Functionally, cell wall formation. In Dichelobacter nodosus (strain VCS1703A), this protein is D-alanine--D-alanine ligase.